We begin with the raw amino-acid sequence, 123 residues long: MQIAWVALGGAIGAVARYVLSNAVYAWLGRAFPWGTLSVNLLGSFIMGLLFYLFTQRLMVPEALKPLVLVGGLGAFTTFSTFSLETLNLMQSGSWSLALLNMLSSVLLCVLAAYLGLVVGRLI.

The next 4 helical transmembrane spans lie at 3-23 (IAWV…LSNA), 34-54 (WGTL…FYLF), 67-87 (LVLV…LETL), and 99-119 (LLNM…GLVV). Residues Gly-74 and Thr-77 each coordinate Na(+).

This sequence belongs to the fluoride channel Fluc/FEX (TC 1.A.43) family.

The protein resides in the cell inner membrane. The enzyme catalyses fluoride(in) = fluoride(out). Its activity is regulated as follows. Na(+) is not transported, but it plays an essential structural role and its presence is essential for fluoride channel function. Fluoride-specific ion channel. Important for reducing fluoride concentration in the cell, thus reducing its toxicity. This chain is Fluoride-specific ion channel FluC, found in Magnetococcus marinus (strain ATCC BAA-1437 / JCM 17883 / MC-1).